The following is a 290-amino-acid chain: Acetylglutamate kinase (290 aa).

Substrate is bound by residues 72-73 (GG), R94, and N187.

It belongs to the acetylglutamate kinase family. ArgB subfamily.

Its subcellular location is the plastid. The protein resides in the chloroplast. It catalyses the reaction N-acetyl-L-glutamate + ATP = N-acetyl-L-glutamyl 5-phosphate + ADP. It functions in the pathway amino-acid biosynthesis; L-arginine biosynthesis; N(2)-acetyl-L-ornithine from L-glutamate: step 2/4. In terms of biological role, catalyzes the ATP-dependent phosphorylation of N-acetyl-L-glutamate. The protein is Acetylglutamate kinase of Cyanidioschyzon merolae (strain NIES-3377 / 10D) (Unicellular red alga).